The chain runs to 109 residues: Small ribosomal subunit protein bS6 (109 aa).

It belongs to the bacterial ribosomal protein bS6 family.

Functionally, binds together with bS18 to 16S ribosomal RNA. This is Small ribosomal subunit protein bS6 from Dehalococcoides mccartyi (strain ATCC BAA-2266 / KCTC 15142 / 195) (Dehalococcoides ethenogenes (strain 195)).